We begin with the raw amino-acid sequence, 488 residues long: MTFNNKTIEELHNLLVSKEISATELTQATLENIKSREEALNSFVTIAEEQALVQAKAIDEAGIDADNVLSGIPLAVKDNISTDGILTTAASKMLYNYEPIFDATAVANAKTKGMIVVGKTNMDEFAMGGSGETSHYGATKNAWNHSKVPGGSSSGSAAAVASGQVRLSLGSDTGGSIRQPAAFNGIVGLKPTYGTVSRFGLIAFGSSLDQIGPFAPTVKENALLLNAIASEDAKDSTSAPVRIADFTSKIGQDIKGMKIALPKEYLGEGIDPEVKETILNAAKHFEKLGAIVEEVSLPHSKYGVAVYYIIASSEASSNLQRFDGIRYGYRAEDATNLDEIYVNSRSQGFGEEVKRRIMLGTFSLSSGYYDAYYKKAGQVRTLIIQDFEKVFADYDLILGPTAPSVAYDLDSLNHDPVAMYLADLLTIPVNLAGLPGISIPAGFSQGLPVGLQLIGPKYSEETIYQAAAAFEATTDYHKQQPVIFGGDN.

Catalysis depends on charge relay system residues K77 and S152. Residue S176 is the Acyl-ester intermediate of the active site.

This sequence belongs to the amidase family. GatA subfamily. Heterotrimer of A, B and C subunits.

The catalysed reaction is L-glutamyl-tRNA(Gln) + L-glutamine + ATP + H2O = L-glutaminyl-tRNA(Gln) + L-glutamate + ADP + phosphate + H(+). Its function is as follows. Allows the formation of correctly charged Gln-tRNA(Gln) through the transamidation of misacylated Glu-tRNA(Gln) in organisms which lack glutaminyl-tRNA synthetase. The reaction takes place in the presence of glutamine and ATP through an activated gamma-phospho-Glu-tRNA(Gln). The protein is Glutamyl-tRNA(Gln) amidotransferase subunit A of Streptococcus pneumoniae (strain JJA).